Consider the following 918-residue polypeptide: DNA ligase 1 (918 aa).

A compositionally biased stretch (polar residues) spans 1 to 15 (MQRSIMSFFQPTTTE). Residues 1–271 (MQRSIMSFFQ…DPTNYNPSKS (271 aa)) are disordered. The segment covering 16-54 (GKAKKPEKEIPSSIREKEPPPKVALKERNRAVPESDSPV) has biased composition (basic and acidic residues). A phosphoserine mark is found at S50, S52, S66, and S67. The residue at position 78 (T78) is a Phosphothreonine. Residues 81–92 (VQKPVSDSKQSS) are compositionally biased toward low complexity. The segment covering 100-114 (PENSPVFNCSPSMDI) has biased composition (polar residues). Residues 120–130 (PKRRTARKQLP) show a composition bias toward basic residues. An N6-acetyllysine modification is found at K145. Residue T195 is modified to Phosphothreonine. K227 is subject to N6-acetyllysine. Residues S230 and S231 each carry the phosphoserine modification. T234 carries the phosphothreonine modification. Positions 240-259 (VKTEVKQEESDTPRKEETKG) are enriched in basic and acidic residues. E566 lines the ATP pocket. K568 acts as the N6-AMP-lysine intermediate in catalysis. The ATP site is built by R573 and E621. Position 621 (E621) interacts with Mg(2+). Residues 642–644 (KRK) form an interaction with target DNA region. A Mg(2+)-binding site is contributed by E720. ATP-binding residues include K725 and K744. T798 is modified (phosphothreonine). S801, S908, S909, and S913 each carry phosphoserine. A disordered region spans residues 881–918 (DKQPEQATTSDQVASLYRKQSQIQNQQSSDLDSDVEDY). A compositionally biased stretch (polar residues) spans 885-910 (EQATTSDQVASLYRKQSQIQNQQSSD).

The protein belongs to the ATP-dependent DNA ligase family. As to quaternary structure, interacts with PCNA. Interacts with POLB. Requires Mg(2+) as cofactor.

It is found in the nucleus. It catalyses the reaction ATP + (deoxyribonucleotide)n-3'-hydroxyl + 5'-phospho-(deoxyribonucleotide)m = (deoxyribonucleotide)n+m + AMP + diphosphate.. Functionally, DNA ligase that seals nicks in double-stranded during DNA repair. Also involved in DNA replication and DNA recombination. In Rattus norvegicus (Rat), this protein is DNA ligase 1 (Lig1).